We begin with the raw amino-acid sequence, 1342 residues long: DNA-directed RNA polymerase subunit beta (1342 aa).

The protein belongs to the RNA polymerase beta chain family. In terms of assembly, the RNAP catalytic core consists of 2 alpha, 1 beta, 1 beta' and 1 omega subunit. When a sigma factor is associated with the core the holoenzyme is formed, which can initiate transcription.

The catalysed reaction is RNA(n) + a ribonucleoside 5'-triphosphate = RNA(n+1) + diphosphate. Its function is as follows. DNA-dependent RNA polymerase catalyzes the transcription of DNA into RNA using the four ribonucleoside triphosphates as substrates. This is DNA-directed RNA polymerase subunit beta from Colwellia psychrerythraea (strain 34H / ATCC BAA-681) (Vibrio psychroerythus).